The chain runs to 290 residues: Bifunctional protein FolD (290 aa).

NADP(+) contacts are provided by residues Gly165–Gly167, Ser194, and Ile235.

Belongs to the tetrahydrofolate dehydrogenase/cyclohydrolase family. As to quaternary structure, homodimer.

It catalyses the reaction (6R)-5,10-methylene-5,6,7,8-tetrahydrofolate + NADP(+) = (6R)-5,10-methenyltetrahydrofolate + NADPH. The enzyme catalyses (6R)-5,10-methenyltetrahydrofolate + H2O = (6R)-10-formyltetrahydrofolate + H(+). The protein operates within one-carbon metabolism; tetrahydrofolate interconversion. In terms of biological role, catalyzes the oxidation of 5,10-methylenetetrahydrofolate to 5,10-methenyltetrahydrofolate and then the hydrolysis of 5,10-methenyltetrahydrofolate to 10-formyltetrahydrofolate. This chain is Bifunctional protein FolD, found in Syntrophotalea carbinolica (strain DSM 2380 / NBRC 103641 / GraBd1) (Pelobacter carbinolicus).